A 203-amino-acid polypeptide reads, in one-letter code: Hydra actinoporin-like toxin 2 (203 aa).

Residues 1-21 (MLSYLCFGCFLVSASLEIACG) form the signal peptide. The Cell attachment site signature appears at 175–177 (RGG).

The protein belongs to the actinoporin family. HALT subfamily. Octamer or nonamer in membranes. Monomer in the soluble state. In vitro, interacts with folate receptor alpha (of target organism). In terms of tissue distribution, strongly expressed in the gland and mucous cells in the endoderm.

It is found in the nematocyst. The protein localises to the secreted. Its subcellular location is the target cell membrane. In terms of biological role, pore-forming protein that forms hydrophilic pores and causes cytolysis. Compared to equinatoxin-2 (AC P61914), it reveals lower cytolysis activity (5-12-fold difference, tested on erythrocytes), a larger pore size (probably 2-3 nm) and different affinity to membrane lipids (100-fold lower affinity to sphingomyelin). Binds to sulfatides (SFT). Shows cytolytic activity on HeLa cells, with a different potency than its paralogs (from most potent to less potent: HALT-4&gt;HALT-6~HALT-1&gt;HALT-3&gt;HALT-7&gt;HALT-2). Pore formation is a multi-step process that involves specific recognition of membrane lipid by a protein aromatic residues rich region, firm binding to the membrane (mainly driven by hydrophobic interactions) accompanied by the transfer of the N-terminal region to the lipid-water interface and finally pore formation after oligomerization of monomers. In vitro, binds to the folate receptor alpha (FOLR1), a GPI-anchored membrane protein that plays a major role in the uptake of folate/folic acid into cells via endocytosis, suggesting a possible involvement of this receptor in the mechanism of HALT-1-induced cell lysis. In vivo, does not cause visible paralysis in larvae of the blowfly Sarcophaga faculata, the most common arthropod prey of Hydra. This is Hydra actinoporin-like toxin 2 from Hydra vulgaris (Hydra).